We begin with the raw amino-acid sequence, 1923 residues long: GREB1-like protein (1923 aa).

Residues 87–96 (EDDEDDEEMS) show a composition bias toward acidic residues. Disordered stretches follow at residues 87-111 (EDDE…KPAP), 246-326 (SCHS…GPPK), and 1101-1222 (RAAV…RGCR). Low complexity predominate over residues 252–262 (PSSSVSSTVTP). Composition is skewed to polar residues over residues 263–278 (ENGT…TQTD), 296–307 (TPAHTGNYSLSP), and 1119–1161 (PQSN…SPAT). The segment covering 1195–1206 (SSTTSKPSSSSS) has biased composition (low complexity). A helical transmembrane segment spans residues 1843 to 1862 (GVFFSGLLLYLCDSFVGADL).

This sequence belongs to the GREB1 family. In terms of tissue distribution, widely expressed, with prominent expression in the cochlea. Expressed at high levels in fetal kidney. In adult tissues, highest levels in vagina, cervix and epididymis.

It is found in the membrane. Functionally, plays a major role in early metanephros and genital development. In Homo sapiens (Human), this protein is GREB1-like protein (GREB1L).